A 143-amino-acid chain; its full sequence is FIS1-related protein fis-1 (143 aa).

A helical transmembrane segment spans residues 121 to 141 (LGLLGGAVAVVGGLVIAGLAF).

The protein belongs to the FIS1 family.

It is found in the mitochondrion outer membrane. The protein resides in the peroxisome membrane. Involved in the fragmentation of the mitochondrial network. Involved in perinuclear clustering of the mitochondrial network. Plays a role in removal of ultraviolet C radiation-induced mitochondrial DNA damage. May act, redundantly with fis-2, downstream of mitochondrial fission, before the fission products participate in either mitochondrial homeostasis, mitophagy, or apoptosis. In Caenorhabditis elegans, this protein is FIS1-related protein fis-1.